A 122-amino-acid polypeptide reads, in one-letter code: UPF0102 protein Dred_2035 (122 aa).

This sequence belongs to the UPF0102 family.

This is UPF0102 protein Dred_2035 from Desulforamulus reducens (strain ATCC BAA-1160 / DSM 100696 / MI-1) (Desulfotomaculum reducens).